The sequence spans 362 residues: Peptide chain release factor 1 (362 aa).

Gln236 carries the N5-methylglutamine modification.

It belongs to the prokaryotic/mitochondrial release factor family. Post-translationally, methylated by PrmC. Methylation increases the termination efficiency of RF1.

The protein localises to the cytoplasm. Functionally, peptide chain release factor 1 directs the termination of translation in response to the peptide chain termination codons UAG and UAA. The sequence is that of Peptide chain release factor 1 from Lactobacillus gasseri (strain ATCC 33323 / DSM 20243 / BCRC 14619 / CIP 102991 / JCM 1131 / KCTC 3163 / NCIMB 11718 / NCTC 13722 / AM63).